The sequence spans 167 residues: UPF0598 protein CG30010 (167 aa).

This sequence belongs to the UPF0598 family.

This Drosophila melanogaster (Fruit fly) protein is UPF0598 protein CG30010.